The chain runs to 213 residues: NADH-quinone oxidoreductase subunit I (213 aa).

2 4Fe-4S ferredoxin-type domains span residues 74 to 103 (RFIESENERCIGCGLCEKICISNCIRMETS) and 113 to 142 (GNYSINLGRCIYCGFCAEVCPELAIVHGTE). [4Fe-4S] cluster contacts are provided by cysteine 83, cysteine 86, cysteine 89, cysteine 93, cysteine 122, cysteine 125, cysteine 128, and cysteine 132.

This sequence belongs to the complex I 23 kDa subunit family. In terms of assembly, NDH-1 is composed of 14 different subunits. Subunits NuoA, H, J, K, L, M, N constitute the membrane sector of the complex. It depends on [4Fe-4S] cluster as a cofactor.

Its subcellular location is the cell inner membrane. The catalysed reaction is a quinone + NADH + 5 H(+)(in) = a quinol + NAD(+) + 4 H(+)(out). Its function is as follows. NDH-1 shuttles electrons from NADH, via FMN and iron-sulfur (Fe-S) centers, to quinones in the respiratory chain. The immediate electron acceptor for the enzyme in this species is believed to be ubiquinone. Couples the redox reaction to proton translocation (for every two electrons transferred, four hydrogen ions are translocated across the cytoplasmic membrane), and thus conserves the redox energy in a proton gradient. This is NADH-quinone oxidoreductase subunit I from Campylobacter jejuni subsp. jejuni serotype O:6 (strain 81116 / NCTC 11828).